We begin with the raw amino-acid sequence, 90 residues long: SAGA-associated factor 11 (90 aa).

The SGF11-type zinc finger occupies 63 to 84; it reads FSCDNCGRKIAGGRFAQHINKC.

The protein belongs to the SGF11 family. Component of the 1.8 MDa SAGA transcription coactivator-HAT complex. SAGA is built of 5 distinct domains with specialized functions. Within the SAGA complex, SUS1, SGF11, SGF73 and UBP8 form an additional subcomplex of SAGA called the DUB module (deubiquitination module). Interacts directly with SGF73, SUS1 and UBP8.

The protein resides in the nucleus. Functionally, functions as a component of the transcription regulatory histone acetylation (HAT) complex SAGA. At the promoters, SAGA is required for recruitment of the basal transcription machinery. It influences RNA polymerase II transcriptional activity through different activities such as TBP interaction and promoter selectivity, interaction with transcription activators, and chromatin modification through histone acetylation and deubiquitination. SAGA acetylates nucleosomal histone H3 to some extent (to form H3K9ac, H3K14ac, H3K18ac and H3K23ac). SAGA interacts with DNA via upstream activating sequences (UASs). Involved in transcriptional regulation of a subset of SAGA-regulated genes. Within the SAGA complex, participates in a subcomplex, that specifically deubiquitinates histones H2B. The sequence is that of SAGA-associated factor 11 from Lodderomyces elongisporus (strain ATCC 11503 / CBS 2605 / JCM 1781 / NBRC 1676 / NRRL YB-4239) (Yeast).